Here is a 147-residue protein sequence, read N- to C-terminus: Large ribosomal subunit protein uL13 (147 aa).

Belongs to the universal ribosomal protein uL13 family. Part of the 50S ribosomal subunit.

This protein is one of the early assembly proteins of the 50S ribosomal subunit, although it is not seen to bind rRNA by itself. It is important during the early stages of 50S assembly. The polypeptide is Large ribosomal subunit protein uL13 (Lactiplantibacillus plantarum (strain ATCC BAA-793 / NCIMB 8826 / WCFS1) (Lactobacillus plantarum)).